Reading from the N-terminus, the 121-residue chain is Small ribosomal subunit protein uS13 (121 aa).

The interval 91 to 121 is disordered; the sequence is HRMSLPVRGQRTRTNARTRRGSRKTVAGRKK. Basic residues predominate over residues 100–121; that stretch reads QRTRTNARTRRGSRKTVAGRKK.

The protein belongs to the universal ribosomal protein uS13 family. In terms of assembly, part of the 30S ribosomal subunit. Forms a loose heterodimer with protein S19. Forms two bridges to the 50S subunit in the 70S ribosome.

Located at the top of the head of the 30S subunit, it contacts several helices of the 16S rRNA. In the 70S ribosome it contacts the 23S rRNA (bridge B1a) and protein L5 of the 50S subunit (bridge B1b), connecting the 2 subunits; these bridges are implicated in subunit movement. Contacts the tRNAs in the A and P-sites. The sequence is that of Small ribosomal subunit protein uS13 from Prochlorococcus marinus (strain AS9601).